Reading from the N-terminus, the 473-residue chain is Ral-GDS-related protein (473 aa).

The disordered stretch occupies residues 117 to 215; the sequence is EPNEAKPDDP…NQPSEELPDM (99 aa). Low complexity predominate over residues 134-157; the sequence is ALTMPALEPAPPLLADLGPALEPE. Residues 173–185 show a composition bias toward pro residues; sequence GPAPAPGEGPPPG. The region spanning 219–471 is the Ras-GEF domain; that stretch reads PPRLLAEQLT…YKLSCQLEPE (253 aa).

It is found in the cytoplasmic vesicle. The protein is Ral-GDS-related protein (RGL4) of Homo sapiens (Human).